A 225-amino-acid polypeptide reads, in one-letter code: Cytidylate kinase (225 aa).

12–20 (GPSGAGKGT) is an ATP binding site.

Belongs to the cytidylate kinase family. Type 1 subfamily.

It localises to the cytoplasm. The catalysed reaction is CMP + ATP = CDP + ADP. It carries out the reaction dCMP + ATP = dCDP + ADP. This Pectobacterium carotovorum subsp. carotovorum (strain PC1) protein is Cytidylate kinase.